A 122-amino-acid polypeptide reads, in one-letter code: Large ribosomal subunit protein uL14 (122 aa).

The protein belongs to the universal ribosomal protein uL14 family. As to quaternary structure, part of the 50S ribosomal subunit. Forms a cluster with proteins L3 and L19. In the 70S ribosome, L14 and L19 interact and together make contacts with the 16S rRNA in bridges B5 and B8.

Binds to 23S rRNA. Forms part of two intersubunit bridges in the 70S ribosome. In Synechococcus sp. (strain JA-2-3B'a(2-13)) (Cyanobacteria bacterium Yellowstone B-Prime), this protein is Large ribosomal subunit protein uL14.